The chain runs to 289 residues: ATP synthase gamma chain (289 aa).

It belongs to the ATPase gamma chain family. As to quaternary structure, F-type ATPases have 2 components, CF(1) - the catalytic core - and CF(0) - the membrane proton channel. CF(1) has five subunits: alpha(3), beta(3), gamma(1), delta(1), epsilon(1). CF(0) has three main subunits: a, b and c.

It is found in the cell inner membrane. Functionally, produces ATP from ADP in the presence of a proton gradient across the membrane. The gamma chain is believed to be important in regulating ATPase activity and the flow of protons through the CF(0) complex. This Haemophilus influenzae (strain 86-028NP) protein is ATP synthase gamma chain.